A 92-amino-acid polypeptide reads, in one-letter code: C-C motif chemokine 3 (92 aa).

A signal peptide spans 1–26; the sequence is MQVSTAALAVLLCTVALCNRISATFA. 2 disulfide bridges follow: Cys-33–Cys-57 and Cys-34–Cys-73.

It belongs to the intercrine beta (chemokine CC) family. In terms of assembly, self-associates. Also heterodimer of MIP-1-alpha(4-69) and MIP-1-beta(3-69). Interacts with CCR1.

It localises to the secreted. Functionally, monokine with inflammatory and chemokinetic properties. Binds to CCR1, CCR4 and CCR5. One of the major HIV-suppressive factors produced by CD8+ T-cells. Recombinant MIP-1-alpha induces a dose-dependent inhibition of different strains of HIV-1, HIV-2, and simian immunodeficiency virus (SIV). In Macaca mulatta (Rhesus macaque), this protein is C-C motif chemokine 3 (CCL3).